The chain runs to 330 residues: Cytoskeleton protein RodZ (330 aa).

At 1–111 (MNTEATQDHQ…LGKRRKKRDG (111 aa)) the chain is on the cytoplasmic side. The HTH cro/C1-type domain occupies 19-71 (LRHAREQLGLSQQAVAERLCLKVSTVRDIEDDKAPADLASTFLRGYIRSYARL). The segment at residues 30–49 (QQAVAERLCLKVSTVRDIED) is a DNA-binding region (H-T-H motif). The helical; Signal-anchor for type II membrane protein transmembrane segment at 112–132 (WLMSFTWLVLFVVIGLSGAWW) threads the bilayer. At 133-330 (WQDHKAQQEE…TLNAEQSPAQ (198 aa)) the chain is on the periplasmic side. The span at 146 to 166 (MADQSSAELNGGDANSQNVPL) shows a compositional bias: polar residues. The disordered stretch occupies residues 146–237 (MADQSSAELN…ASPLPTDQAN (92 aa)). Low complexity-rich tracts occupy residues 176–202 (TDSA…TPAD) and 216–233 (TAGT…PLPT).

This sequence belongs to the RodZ family.

Its subcellular location is the cell inner membrane. In terms of biological role, cytoskeletal protein that is involved in cell-shape control through regulation of the length of the long axis. The protein is Cytoskeleton protein RodZ of Klebsiella pneumoniae (strain 342).